The following is a 102-amino-acid chain: Apolipoprotein A-II (102 aa).

The first 18 residues, 1 to 18, serve as a signal peptide directing secretion; it reads MKLLAMVALLVTICSLEG. Residue M49 is modified to Methionine sulfoxide.

Belongs to the apolipoprotein A2 family. Monomer. Interacts with NAXE and NDRG1. In terms of tissue distribution, plasma.

The protein resides in the secreted. Its function is as follows. May stabilize HDL (high density lipoprotein) structure by its association with lipids, and affect the HDL metabolism. This chain is Apolipoprotein A-II (Apoa2), found in Rattus norvegicus (Rat).